The chain runs to 313 residues: Ornithine carbamoyltransferase (313 aa).

Carbamoyl phosphate is bound by residues 61 to 64, Q88, R112, and 139 to 142; these read STRT and HPCQ. Residues N170, D228, and 232 to 233 each bind L-ornithine; that span reads SM. Carbamoyl phosphate is bound by residues 268–269 and R296; that span reads CL.

It belongs to the aspartate/ornithine carbamoyltransferase superfamily. OTCase family.

It is found in the cytoplasm. The catalysed reaction is carbamoyl phosphate + L-ornithine = L-citrulline + phosphate + H(+). It participates in amino-acid biosynthesis; L-arginine biosynthesis; L-arginine from L-ornithine and carbamoyl phosphate: step 1/3. Reversibly catalyzes the transfer of the carbamoyl group from carbamoyl phosphate (CP) to the N(epsilon) atom of ornithine (ORN) to produce L-citrulline. This Bordetella parapertussis (strain 12822 / ATCC BAA-587 / NCTC 13253) protein is Ornithine carbamoyltransferase.